The primary structure comprises 192 residues: 7-methyl-GTP pyrophosphatase (192 aa).

The active-site Proton acceptor is aspartate 69.

The protein belongs to the Maf family. YceF subfamily. A divalent metal cation is required as a cofactor.

The protein localises to the cytoplasm. The catalysed reaction is N(7)-methyl-GTP + H2O = N(7)-methyl-GMP + diphosphate + H(+). Its function is as follows. Nucleoside triphosphate pyrophosphatase that hydrolyzes 7-methyl-GTP (m(7)GTP). May have a dual role in cell division arrest and in preventing the incorporation of modified nucleotides into cellular nucleic acids. The sequence is that of 7-methyl-GTP pyrophosphatase from Pseudomonas savastanoi pv. phaseolicola (strain 1448A / Race 6) (Pseudomonas syringae pv. phaseolicola (strain 1448A / Race 6)).